The following is a 432-amino-acid chain: Putative transferase At1g60990, chloroplastic (432 aa).

The transit peptide at 1-57 (MNLLQSCKDMAMMMRIDSVSHITNTALLPCLYNGTVLRRRSLSLRKCGFRERKFQLR) directs the protein to the chloroplast.

It belongs to the GcvT family. Expressed in young leaves (at protein level).

The protein localises to the plastid. It localises to the chloroplast. Folate-dependent protein involved in Fe/S cluster biogenesis. Functionally complements an E.coli mutant defective in ygfZ. The protein is Putative transferase At1g60990, chloroplastic of Arabidopsis thaliana (Mouse-ear cress).